The primary structure comprises 482 residues: tRNA sulfurtransferase (482 aa).

One can recognise a THUMP domain in the interval 61 to 165 (LTIRDALTRI…DDRLLLIKGR (105 aa)). ATP contacts are provided by residues 183–184 (LI), K265, G287, and Q296. C344 and C456 are oxidised to a cystine. The region spanning 404–482 (FGPNDVILDI…GFNNVKVYRP (79 aa)) is the Rhodanese domain. Residue C456 is the Cysteine persulfide intermediate of the active site.

Belongs to the ThiI family.

Its subcellular location is the cytoplasm. It catalyses the reaction [ThiI sulfur-carrier protein]-S-sulfanyl-L-cysteine + a uridine in tRNA + 2 reduced [2Fe-2S]-[ferredoxin] + ATP + H(+) = [ThiI sulfur-carrier protein]-L-cysteine + a 4-thiouridine in tRNA + 2 oxidized [2Fe-2S]-[ferredoxin] + AMP + diphosphate. It carries out the reaction [ThiS sulfur-carrier protein]-C-terminal Gly-Gly-AMP + S-sulfanyl-L-cysteinyl-[cysteine desulfurase] + AH2 = [ThiS sulfur-carrier protein]-C-terminal-Gly-aminoethanethioate + L-cysteinyl-[cysteine desulfurase] + A + AMP + 2 H(+). It functions in the pathway cofactor biosynthesis; thiamine diphosphate biosynthesis. Catalyzes the ATP-dependent transfer of a sulfur to tRNA to produce 4-thiouridine in position 8 of tRNAs, which functions as a near-UV photosensor. Also catalyzes the transfer of sulfur to the sulfur carrier protein ThiS, forming ThiS-thiocarboxylate. This is a step in the synthesis of thiazole, in the thiamine biosynthesis pathway. The sulfur is donated as persulfide by IscS. This chain is tRNA sulfurtransferase, found in Shigella flexneri.